Consider the following 361-residue polypeptide: Peptide chain release factor 1 (361 aa).

Q237 is subject to N5-methylglutamine. The disordered stretch occupies residues 283–307 (AQQQEQQEQQSSTRKELIGSGDRSQ).

The protein belongs to the prokaryotic/mitochondrial release factor family. Post-translationally, methylated by PrmC. Methylation increases the termination efficiency of RF1.

It localises to the cytoplasm. Its function is as follows. Peptide chain release factor 1 directs the termination of translation in response to the peptide chain termination codons UAG and UAA. In Vesicomyosocius okutanii subsp. Calyptogena okutanii (strain HA), this protein is Peptide chain release factor 1.